The following is a 143-amino-acid chain: MNRRKSREVAMRLLFQTTLNGENLEEALENLKDVRESEEITKEKDYESVDLKDVDIDYVKRIIKGIEENKEEIDEKIKGNLKNWKIERLSKVDLSILRLCTYELKFEEDIPNRVSINEAIELAKKYSGEKSATFINGVLGKMI.

The protein belongs to the NusB family.

Its function is as follows. Involved in transcription antitermination. Required for transcription of ribosomal RNA (rRNA) genes. Binds specifically to the boxA antiterminator sequence of the ribosomal RNA (rrn) operons. This Clostridium botulinum (strain Kyoto / Type A2) protein is Transcription antitermination protein NusB.